The chain runs to 607 residues: UvrABC system protein C (607 aa).

The GIY-YIG domain maps to 16 to 94 (GRPGVYRMFD…IKEWRPPYNI (79 aa)). Residues 203 to 238 (NALTDELSAGMEQAASTLDFEKAAELRDQISLLRRV) enclose the UVR domain.

Belongs to the UvrC family. In terms of assembly, interacts with UvrB in an incision complex.

It localises to the cytoplasm. Functionally, the UvrABC repair system catalyzes the recognition and processing of DNA lesions. UvrC both incises the 5' and 3' sides of the lesion. The N-terminal half is responsible for the 3' incision and the C-terminal half is responsible for the 5' incision. This Pseudomonas protegens (strain DSM 19095 / LMG 27888 / CFBP 6595 / CHA0) protein is UvrABC system protein C.